A 355-amino-acid polypeptide reads, in one-letter code: MLFINLRTLLNNAALRNGHNFVVRNFRCGQPVQDKVQLKGRDLLTLKNFTGEEIKYMLWLSADLKFRIKQKGEYLPLLQGKSLGMIFEKRSTRTRLSTETGFALLGGHPCFLTTDDIHLGVNESLTDTARVLSSMTDAVLARVYKQSDLDILAKEASIPIVNGLSDLYHPIQILADYLTLQEHYGSLKGLTLSWIGDGNNILHSIMMSAAKFGMHLQVATPKGYEPDPSITKLAEQYAKENGTKLSLTNDPLEAACGGNVLITDTWISMGQEEEKKKRLQAFQGYQVTMKTAKVAAPDWTFLHCLPRKPEEVDDEVFYSPRSLVFPEAENRKWTIMAVMVSLLTDYSPQLQKPKF.

The N-terminal 35 residues, 1 to 35, are a transit peptide targeting the mitochondrion; sequence MLFINLRTLLNNAALRNGHNFVVRNFRCGQPVQDK. An N6-acetyllysine; alternate modification is found at Lys71. N6-succinyllysine; alternate is present on Lys71. Lys81 is modified (N6-succinyllysine). An N6-acetyllysine; alternate modification is found at Lys89. Lys89 is subject to N6-succinyllysine; alternate. Carbamoyl phosphate is bound at residue 91–95; sequence STRTR. A Phosphoserine modification is found at Ser134. Arg142 contacts carbamoyl phosphate. L-ornithine is bound at residue Arg142. Lys145 carries the post-translational modification N6-acetyllysine; alternate. The residue at position 145 (Lys145) is an N6-succinyllysine; alternate. His169 serves as a coordination point for carbamoyl phosphate. Residue Asn200 coordinates L-ornithine. Lys222, Lys232, and Lys239 each carry N6-acetyllysine; alternate. Lys222, Lys232, and Lys239 each carry N6-succinyllysine; alternate. Lys244 is subject to N6-acetyllysine. 264-268 contributes to the L-ornithine binding site; sequence DTWIS. 2 positions are modified to N6-succinyllysine: Lys275 and Lys290. Lys293 carries the post-translational modification N6-acetyllysine; alternate. The residue at position 293 (Lys293) is an N6-succinyllysine; alternate. 303–306 serves as a coordination point for L-ornithine; the sequence is HCLP. The active site involves Cys304. Residue Lys308 is modified to N6-acetyllysine; alternate. Lys308 is modified (N6-succinyllysine; alternate). Arg331 is a binding site for carbamoyl phosphate. Arg331 serves as a coordination point for L-ornithine.

Belongs to the aspartate/ornithine carbamoyltransferase superfamily. OTCase family. In terms of assembly, homotrimer. Acetylation at Lys-89 negatively regulates ornithine carbamoyltransferase activity in response to nutrient signals.

Its subcellular location is the mitochondrion matrix. It catalyses the reaction carbamoyl phosphate + L-ornithine = L-citrulline + phosphate + H(+). Its pathway is nitrogen metabolism; urea cycle; L-citrulline from L-ornithine and carbamoyl phosphate: step 1/1. With respect to regulation, negatively regulated by lysine acetylation. Catalyzes the second step of the urea cycle, the condensation of carbamoyl phosphate with L-ornithine to form L-citrulline. The urea cycle ensures the detoxification of ammonia by converting it to urea for excretion. The chain is Ornithine transcarbamylase, mitochondrial from Ovis aries (Sheep).